The primary structure comprises 127 residues: Large ribosomal subunit protein bL17 (127 aa).

Belongs to the bacterial ribosomal protein bL17 family. In terms of assembly, part of the 50S ribosomal subunit. Contacts protein L32.

This is Large ribosomal subunit protein bL17 from Lacticaseibacillus casei (strain BL23) (Lactobacillus casei).